Consider the following 406-residue polypeptide: RILP-like protein 1 (406 aa).

Residues glutamine 5 to glutamate 99 enclose the RH1 domain. A coiled-coil region spans residues aspartate 105 to alanine 319. Disordered stretches follow at residues glutamate 234–glutamate 272 and serine 323–proline 351. Basic and acidic residues predominate over residues glutamate 241–glutamate 257. One can recognise an RH2 domain in the interval arginine 289 to leucine 358. The segment covering threonine 340–proline 351 has biased composition (polar residues).

Belongs to the RILPL family.

The protein resides in the cytoplasm. The protein localises to the cytosol. It is found in the cytoskeleton. It localises to the microtubule organizing center. Its subcellular location is the centrosome. The protein resides in the cell projection. The protein localises to the cilium. Functionally, plays a role in the regulation of cell shape and polarity. Plays a role in cellular protein transport, including protein transport away from primary cilia. Neuroprotective protein. The chain is RILP-like protein 1 (rilpl1) from Danio rerio (Zebrafish).